The primary structure comprises 247 residues: UPF0280 protein MmarC7_0482 (247 aa).

This sequence belongs to the UPF0280 family.

The sequence is that of UPF0280 protein MmarC7_0482 from Methanococcus maripaludis (strain C7 / ATCC BAA-1331).